We begin with the raw amino-acid sequence, 3584 residues long: D-lysergyl-peptide-synthetase subunit 1 (3584 aa).

A disordered region spans residues 25–44; that stretch reads IESINGDKNKSERHTASSSA. Residues 29–39 show a composition bias toward basic and acidic residues; the sequence is NGDKNKSERHT. Residues 307–706 are adenylation (A) domain 1; the sequence is SCCSRPNSQA…LGRKDDQVKI (400 aa). The Carrier 1 domain occupies 848-917; that stretch reads REKLLQALFA…TLREIVIVST (70 aa). At Ser880 the chain carries O-(pantetheine 4'-phosphoryl)serine. The condensation (C) domain 1 stretch occupies residues 962–1353; sequence EDIYPCTHLQ…EHILTQIHSN (392 aa). Positions 1396-1803 are adenylation (A) domain 2; it reads QAKCQAQPDA…RRKDAQVKIR (408 aa). The Carrier 2 domain maps to 1948-2016; that stretch reads TEHEISAIWA…TIRKLALARG (69 aa). Ser1980 is subject to O-(pantetheine 4'-phosphoryl)serine. The interval 2066 to 2483 is condensation (C) domain 2; the sequence is ERIYPCSPIQ…ALPVLDEDQM (418 aa). The segment at 2508 to 2906 is adenylation (A) domain 3; that stretch reads QCIRCPDSPS…GRNDDQVKVR (399 aa). The Carrier 3 domain maps to 3041–3109; the sequence is MEAELQQLVG…RLSDLARIVE (69 aa). Position 3073 is an O-(pantetheine 4'-phosphoryl)serine (Ser3073). Residues 3174 to 3472 form a cyclization (Cyc) domain region; the sequence is LYFSKPMASE…VAKSTTWSSD (299 aa).

Belongs to the NRP synthetase family.

The protein operates within alkaloid biosynthesis; ergot alkaloid biosynthesis. Functionally, D-lysergyl-peptide-synthetase subunit 1; part of the gene cluster that mediates the biosynthesis of fungal ergot alkaloid. DmaW catalyzes the first step of ergot alkaloid biosynthesis by condensing dimethylallyl diphosphate (DMAP) and tryptophan to form 4-dimethylallyl-L-tryptophan. The second step is catalyzed by the methyltransferase easF that methylates 4-dimethylallyl-L-tryptophan in the presence of S-adenosyl-L-methionine, resulting in the formation of 4-dimethylallyl-L-abrine. The catalase easC and the FAD-dependent oxidoreductase easE then transform 4-dimethylallyl-L-abrine to chanoclavine-I which is further oxidized by easD in the presence of NAD(+), resulting in the formation of chanoclavine-I aldehyde. Agroclavine dehydrogenase easG then mediates the conversion of chanoclavine-I aldehyde to agroclavine via a non-enzymatic adduct reaction: the substrate is an iminium intermediate that is formed spontaneously from chanoclavine-I aldehyde in the presence of glutathione. The presence of easA is not required to complete this reaction. Further conversion of agroclavine to paspalic acid is a two-step process involving oxidation of agroclavine to elymoclavine and of elymoclavine to paspalic acid, the second step being performed by the elymoclavine oxidase cloA. Paspalic acid is then further converted to D-lysergic acid. Ergopeptines are assembled from D-lysergic acid and three different amino acids by the D-lysergyl-peptide-synthetases composed each of a monomudular and a trimodular nonribosomal peptide synthetase subunit. LpsB and lpsC encode the monomodular subunits responsible for D-lysergic acid activation and incorporation into the ergopeptine backbone. LpsA1 and A2 subunits encode the trimodular nonribosomal peptide synthetase assembling the tripeptide portion of ergopeptines. LpsA1 is responsible for formation of the major ergopeptine, ergotamine, and lpsA2 for alpha-ergocryptine, the minor ergopeptine of the total alkaloid mixture elaborated by C.purpurea. D-lysergyl-tripeptides are assembled by the nonribosomal peptide synthetases and released as N-(D-lysergyl-aminoacyl)-lactams. Cyclolization of the D-lysergyl-tripeptides is performed by the Fe(2+)/2-ketoglutarate-dependent dioxygenase easH which introduces a hydroxyl group into N-(D-lysergyl-aminoacyl)-lactam at alpha-C of the aminoacyl residue followed by spontaneous condensation with the terminal lactam carbonyl group. The polypeptide is D-lysergyl-peptide-synthetase subunit 1 (Claviceps purpurea (strain 20.1) (Ergot fungus)).